A 175-amino-acid polypeptide reads, in one-letter code: MKILVLAVHPHMETSVVNKAWAEELSKHDNITVRDLYKEYPDEAIDVAKEQQLCEEYDRIVFQFPLYWYSSPPLLKKWQDLVLTYGWAFGSEGNALHGKELMLAVSTGSEAEKYQAGGANHYSISELLKPFQATSNLIGMKYLPPYVFYGVNYAAAEDISHSAKRLAEYIQQPFV.

It belongs to the NAD(P)H dehydrogenase (quinone) family.

This Bacillus subtilis (strain 168) protein is General stress protein 14 (ywrO).